The sequence spans 404 residues: Argininosuccinate synthase (404 aa).

9 to 17 (AYSGGLDTS) is an ATP binding site. L-citrulline is bound at residue Tyr-86. Gly-116 is an ATP binding site. L-aspartate-binding residues include Thr-118, Asn-122, and Asp-123. L-citrulline is bound at residue Asn-122. Positions 126, 174, 183, 259, and 271 each coordinate L-citrulline.

This sequence belongs to the argininosuccinate synthase family. Type 1 subfamily. Homotetramer.

It localises to the cytoplasm. It catalyses the reaction L-citrulline + L-aspartate + ATP = 2-(N(omega)-L-arginino)succinate + AMP + diphosphate + H(+). It functions in the pathway amino-acid biosynthesis; L-arginine biosynthesis; L-arginine from L-ornithine and carbamoyl phosphate: step 2/3. The polypeptide is Argininosuccinate synthase (Listeria monocytogenes serovar 1/2a (strain ATCC BAA-679 / EGD-e)).